Reading from the N-terminus, the 309-residue chain is MDDKTFTKELDQWVEQLNECKQLNENQVRTLCEKAKEILTKESNVQEVRCPVTVCGDVHGQFHDLMELFRIGGKSPDTNYLFMGDYVDRGYYSVETVTLLVALKVRYPERITILRGNHESRQITQVYGFYDECLRKYGNANVWKYFTDLFDYLPLTALVDGQIFCLHGGLSPSIDTLDHIRALDRLQEVPHEGPMCDLLWSDPDDRGGWGISPRGAGYTFGQDISETFNHANGLTLVSRAHQLVMEGYNWCHDRNVVTIFSAPNYCYRCGNQAAIMELDDTLKYSFLQFDPAPRRGEPHVTRRTPDYFL.

Residues D57, H59, D85, and N117 each coordinate Mn(2+). The active-site Proton donor is H118. Mn(2+) is bound by residues H167 and H241. Y307 carries the post-translational modification Phosphotyrosine. L309 bears the Leucine methyl ester mark.

It belongs to the PPP phosphatase family. PP-1 subfamily. Found in a complex with at least ARL2, PPP2CB, PPP2R1A, PPP2R2A, PPP2R5E and TBCD. Interacts with TBCD. PP2A consists of a common heterodimeric core enzyme (composed of a 36 kDa catalytic subunit (subunit C) and a 65 kDa constant regulatory subunit (PR65) (subunit A)) that associates with a variety of regulatory subunits. Proteins that associate with the core dimer include three families of regulatory subunits B (the R2/B/PR55/B55, R3/B''/PR72/PR130/PR59 and R5/B'/B56 families), the 48 kDa variable regulatory subunit, viral proteins, and cell signaling molecules. Binds PPME1. May indirectly interact with SGO1, most probably through regulatory B56 subunits. Interacts with CTTNBP2NL. Interacts with PTPA. Part of the core of STRIPAK complexes composed of PP2A catalytic and scaffolding subunits, the striatins (PP2A regulatory subunits), the striatin-associated proteins MOB4, STRIP1 and STRIP2, PDCD10 and members of the STE20 kinases, such as STK24 and STK26. Mn(2+) serves as cofactor. Reversibly methyl esterified on Leu-309 by leucine carboxyl methyltransferase 1 (Lcmt1) and protein phosphatase methylesterase 1 (PPME1). Carboxyl methylation influences the affinity of the catalytic subunit for the different regulatory subunits, thereby modulating the PP2A holoenzyme's substrate specificity, enzyme activity and cellular localization. In terms of processing, phosphorylation of either threonine (by autophosphorylation-activated protein kinase) or tyrosine results in inactivation of the phosphatase. Auto-dephosphorylation has been suggested as a mechanism for reactivation. Post-translationally, may be monoubiquitinated by NOSIP.

It is found in the cytoplasm. The protein localises to the nucleus. It localises to the chromosome. Its subcellular location is the centromere. The protein resides in the cytoskeleton. It is found in the spindle pole. It catalyses the reaction O-phospho-L-seryl-[protein] + H2O = L-seryl-[protein] + phosphate. The catalysed reaction is O-phospho-L-threonyl-[protein] + H2O = L-threonyl-[protein] + phosphate. In terms of biological role, catalytic subunit of protein phosphatase 2A (PP2A), a serine/threonine phosphatase involved in the regulation of a wide variety of enzymes, signal transduction pathways, and cellular events. PP2A can modulate the activity of phosphorylase B kinase, casein kinase 2, mitogen-stimulated S6 kinase, and MAP-2 kinase. Part of the striatin-interacting phosphatase and kinase (STRIPAK) complexes. STRIPAK complexes have critical roles in protein (de)phosphorylation and are regulators of multiple signaling pathways including Hippo, MAPK, nuclear receptor and cytoskeleton remodeling. Different types of STRIPAK complexes are involved in a variety of biological processes such as cell growth, differentiation, apoptosis, metabolism and immune regulation. This Oryctolagus cuniculus (Rabbit) protein is Serine/threonine-protein phosphatase 2A catalytic subunit beta isoform (PPP2CB).